The chain runs to 150 residues: UPF0178 protein PP_5221 (150 aa).

It belongs to the UPF0178 family.

The sequence is that of UPF0178 protein PP_5221 from Pseudomonas putida (strain ATCC 47054 / DSM 6125 / CFBP 8728 / NCIMB 11950 / KT2440).